The primary structure comprises 543 residues: Vibriobactin-specific 2,3-dihydroxybenzoate-AMP ligase (543 aa).

A helical transmembrane segment spans residues Phe240–Leu259.

It belongs to the ATP-dependent AMP-binding enzyme family.

The protein localises to the cell inner membrane. It catalyses the reaction 2,3-dihydroxybenzoate + holo-[ACP] + ATP = 2,3-dihydroxybenzoyl-[ACP] + AMP + diphosphate. Its pathway is siderophore biosynthesis; vibriobactin biosynthesis. Its function is as follows. Activation of the carboxylate group of 2,3-dihydroxy-benzoate (DHB), via ATP-dependent PPi exchange reactions, to the acyladenylate, preparing that molecule for the final stages of vibriobactin synthesis. This chain is Vibriobactin-specific 2,3-dihydroxybenzoate-AMP ligase (vibE), found in Vibrio cholerae serotype O1 (strain ATCC 39315 / El Tor Inaba N16961).